Here is a 96-residue protein sequence, read N- to C-terminus: Cystatin (96 aa).

A Cystatin domain is found at 22–65; that stretch reads DFIKAALNETGTHAGRKYKVLRSSQQVVAGMKYTFYIVFEDDES. The N-linked (GlcNAc...) asparagine glycan is linked to asparagine 29.

The protein belongs to the cystatin family. Interacts with cathepsin L-like peptidase; the interaction results in inhibition of cathepsin L-like peptidase activity. In terms of tissue distribution, salivary gland. Midgut.

In terms of biological role, cysteine proteinase inhibitor. Inhibits cathepsin L-like peptidase. Increases cell viability following apoptosis induction by staurosporine. Inhibits human cathepsin S (CTSS), human cathepsin L2 (CTSV), human cathepsin L (CTSL), human cathepsin B (CTSB) and papain. Functionally, (Microbial infection) Modulates dengue virus type 2 replication in salivary glands. This chain is Cystatin, found in Aedes aegypti (Yellowfever mosquito).